The sequence spans 245 residues: 1-(5-phosphoribosyl)-5-[(5-phosphoribosylamino)methylideneamino] imidazole-4-carboxamide isomerase (245 aa).

The Proton acceptor role is filled by aspartate 7. The active-site Proton donor is aspartate 129.

The protein belongs to the HisA/HisF family.

It localises to the cytoplasm. It catalyses the reaction 1-(5-phospho-beta-D-ribosyl)-5-[(5-phospho-beta-D-ribosylamino)methylideneamino]imidazole-4-carboxamide = 5-[(5-phospho-1-deoxy-D-ribulos-1-ylimino)methylamino]-1-(5-phospho-beta-D-ribosyl)imidazole-4-carboxamide. It functions in the pathway amino-acid biosynthesis; L-histidine biosynthesis; L-histidine from 5-phospho-alpha-D-ribose 1-diphosphate: step 4/9. In Escherichia coli O127:H6 (strain E2348/69 / EPEC), this protein is 1-(5-phosphoribosyl)-5-[(5-phosphoribosylamino)methylideneamino] imidazole-4-carboxamide isomerase.